The following is a 397-amino-acid chain: Acetyl-CoA acetyltransferase, cytosolic (397 aa).

Position 1 is an N-acetylmethionine (methionine 1). The active-site Acyl-thioester intermediate is cysteine 92. The residue at position 200 (lysine 200) is an N6-acetyllysine. CoA-binding residues include arginine 223 and serine 226. 2 positions are modified to N6-acetyllysine: lysine 233 and lysine 235. Serine 252 is a binding site for CoA. Cysteine 383 functions as the Proton donor/acceptor in the catalytic mechanism.

Belongs to the thiolase-like superfamily. Thiolase family. In terms of assembly, homotetramer.

Its subcellular location is the cytoplasm. It localises to the cytosol. The catalysed reaction is 2 acetyl-CoA = acetoacetyl-CoA + CoA. Its pathway is lipid metabolism; fatty acid metabolism. Involved in the biosynthetic pathway of cholesterol. The protein is Acetyl-CoA acetyltransferase, cytosolic (ACAT2) of Homo sapiens (Human).